The primary structure comprises 967 residues: Transmembrane channel-like protein 5 (967 aa).

Composition is skewed to polar residues over residues 1–10 (MSSFHQNSSY), 21–31 (GSRNHTHNYLE), 53–62 (NPHSSGSRTN), and 168–184 (QDNS…SNLP). Residues 1–240 (MSSFHQNSSY…EEGDGYSSSK (240 aa)) are disordered. Topologically, residues 1 to 420 (MSSFHQNSSY…YFSFLRWLLK (420 aa)) are extracellular. The chain crosses the membrane as a helical span at residues 421 to 441 (FNIFSFVMNFSFIIIPQFTVG). The Cytoplasmic portion of the chain corresponds to 442–449 (AKNTLQFT). A helical membrane pass occupies residues 450–470 (GLEFFTGAGYFGDTVMYYGFY). Topologically, residues 471–487 (TNSTIRHRMGGASYNMQ) are extracellular. A helical membrane pass occupies residues 488–508 (LAYIFTIGACLVVCFFSLLFS). The Cytoplasmic portion of the chain corresponds to 509–581 (MAKYFRNNFI…NQQLTRFSAH (73 aa)). Residues 582–602 (VAAWLVSTGVTAACCVAVYYL) traverse the membrane as a helical segment. Topologically, residues 603-616 (AEYNSEFLKTHRNP) are extracellular. A helical transmembrane segment spans residues 617–637 (GAVLLLPFVVSCINLAVPRFY). At 638-660 (SMFRLVERYEIPRQEVYVLLVRN) the chain is on the cytoplasmic side. The chain crosses the membrane as a helical span at residues 661–681 (IFLKISIVGILCYYWLNIVAL). At 682-694 (SGEECWETLIGQD) the chain is on the extracellular side. A helical transmembrane segment spans residues 695 to 715 (IYRLLLMDFVFSLADSLLGEF). Topologically, residues 716–749 (LRRLIGMKFTSLSLQEFDIARNVLELIYAQTLTW) are cytoplasmic. A helical membrane pass occupies residues 750-770 (LGIFFCPLLPFIQMITLFIMF). Topologically, residues 771 to 796 (YVKNVSLMMNFQPPSKAWRASQMITF) are extracellular. The helical transmembrane segment at 797 to 817 (FIFLLFFPSFTGVLCTLAITI) threads the bilayer. Over 818-861 (WRLKPSADCGPFRGLPSFIQSIYSWIDTLSRRPGYLWVVWIYQN) the chain is Cytoplasmic. Residues 862–882 (LIGSVHFFFILTLIVLIITYL) form a helical membrane-spanning segment. Residues 883 to 967 (YWQITEGRKV…RSAQEENPIA (85 aa)) are Extracellular-facing.

The protein belongs to the TMC family. In terms of tissue distribution, ubiquitously expressed.

Its subcellular location is the membrane. Functionally, probable component of an ion channel. Molecular function hasn't been characterized yet. The protein is Transmembrane channel-like protein 5 of Mus musculus (Mouse).